A 173-amino-acid polypeptide reads, in one-letter code: Photosystem I assembly protein Ycf3 (173 aa).

TPR repeat units lie at residues 35-68, 72-105, and 120-153; these read AFVYYRDGMSAQADGEYAEALDNYYEALKLEEDP, SYILYNIGIIHASNGDQEKALEYYNQSVDLNPRM, and GEKAREEGREEEAEALYDKAAEYWKQAIRLAPNN.

This sequence belongs to the Ycf3 family.

Its subcellular location is the cellular thylakoid membrane. Essential for the assembly of the photosystem I (PSI) complex. May act as a chaperone-like factor to guide the assembly of the PSI subunits. In Rippkaea orientalis (strain PCC 8801 / RF-1) (Cyanothece sp. (strain PCC 8801)), this protein is Photosystem I assembly protein Ycf3.